The primary structure comprises 562 residues: Sesquiterpene synthase (562 aa).

Positions 315, 319, and 467 each coordinate Mg(2+). Positions 315–319 (DDIYD) match the DDXXD motif motif.

Belongs to the terpene synthase family. Tpsa subfamily. It depends on Mg(2+) as a cofactor. Requires Mn(2+) as cofactor.

In terms of biological role, catalyzes the formation of beta-elemol, guaiol and bulnesol. This chain is Sesquiterpene synthase, found in Santalum spicatum (Australian sandalwood).